The chain runs to 657 residues: Probable potassium transport system protein Kup (657 aa).

Helical transmembrane passes span 15–35 (SFLI…LYVM), 48–68 (ITPD…TLLT), 100–120 (WLII…MLTP), 147–167 (IIII…HFGT), 173–193 (IFGP…IVNL), 219–239 (LGFF…ALYS), 251–271 (LTWP…AAWI), 292–312 (MMPS…AIIA), 348–368 (IYMP…VLYF), 378–398 (YGLS…NYLL), 403–423 (PLPI…SFLI), and 431–451 (KGGF…YIWI).

Belongs to the HAK/KUP transporter (TC 2.A.72) family.

The protein localises to the cell membrane. The enzyme catalyses K(+)(in) + H(+)(in) = K(+)(out) + H(+)(out). In terms of biological role, transport of potassium into the cell. Likely operates as a K(+):H(+) symporter. This Clostridium perfringens (strain SM101 / Type A) protein is Probable potassium transport system protein Kup.